The following is a 62-amino-acid chain: Beta-defensin 37 (62 aa).

Positions 1-16 (MKFSYFLLLLLSLSNF) are cleaved as a signal peptide. Cystine bridges form between cysteine 29/cysteine 58, cysteine 36/cysteine 51, and cysteine 41/cysteine 59.

It belongs to the beta-defensin family. As to expression, only expressed in epididymis (corpus and cauda).

The protein localises to the secreted. Functionally, has antibacterial activity. The protein is Beta-defensin 37 (Defb37) of Mus musculus (Mouse).